Reading from the N-terminus, the 637-residue chain is Nucleoside triphosphatase I (637 aa).

The 163-residue stretch at 43–205 folds into the Helicase ATP-binding domain; sequence FLGLNSMNSI…QMLVNLLRPG (163 aa). Position 56-63 (56-63) interacts with ATP; sequence QETGVGKT. Residues 142–145 carry the DEXH box motif; sequence DECH. One can recognise a Helicase C-terminal domain in the interval 358–537; it reads ELYNYLYEHS…QLYKVFKHSS (180 aa). Residues 459-526 are binding to the cap-specific mRNA (nucleoside-2'-O-)-methyltransferase; that stretch reads DIFILDMTWN…DIIQSKSKEF (68 aa).

It belongs to the helicase family. NPH I subfamily. In terms of assembly, monomer. Interacts (via C-terminus) with RAP94 (via N-terminus). Interacts with the cap-specific mRNA (nucleoside-2'-O-)-methyltransferase.

It is found in the virion. It catalyses the reaction a ribonucleoside 5'-triphosphate + H2O = a ribonucleoside 5'-diphosphate + phosphate + H(+). Functionally, DNA-dependent ATPase required for providing the needed energy to achieve the termination of early transcripts. Acts in concert with the RAP94 subunit of the virion RNA polymerase and the capping enzyme/VTF to catalyze release of UUUUUNU-containing nascent RNA from the elongation complex. NPH-I must bind ssDNA in order to exhibit ATPase activity. This is Nucleoside triphosphatase I (NPH1) from Vertebrata (FPV).